The chain runs to 361 residues: Adenosine kinase (361 aa).

Residues 7-15 (PKPKKLKVE) carry the Nuclear localization signal motif. Position 34 (Asp-34) interacts with adenosine. Ser-48 contacts Mg(2+). Phosphotyrosine is present on Tyr-76. Positions 146 and 147 each coordinate Mg(2+). Gln-305 contacts adenosine. Residue Asp-316 is part of the active site. Asp-316 serves as the catalytic Proton acceptor.

The protein belongs to the carbohydrate kinase PfkB family. As to quaternary structure, monomer. The cofactor is Mg(2+). The N-terminus is blocked.

The protein localises to the nucleus. The enzyme catalyses adenosine + ATP = AMP + ADP + H(+). It functions in the pathway purine metabolism; AMP biosynthesis via salvage pathway; AMP from adenosine: step 1/1. Its activity is regulated as follows. Activity is inhibited by 5-iodotubercidin and 5'-amino-5'-deoxyadenosine. Catalyzes the phosphorylation of the purine nucleoside adenosine at the 5' position in an ATP-dependent manner. Serves as a potential regulator of concentrations of extracellular adenosine and intracellular adenine nucleotides. This Cricetulus griseus (Chinese hamster) protein is Adenosine kinase (ADK).